The sequence spans 361 residues: MLYEILYSLSDYISGLNVFKYITFRTMLAILTSFFFTFIIAPPCIRWLKKLSLTQHIRDDGPKTHLKKEGTPTMGGIIITASVLVAVLMWGNLKNHYMWIMIISFLGFGLIGFIDDYLKITRKNYKGLPGRYKLFAQLLLASSVTLFLYFNPKDPYTTVLSIPFFKQWLIDLGIFYLPFAIFVIVGSSNAVNLTDGMDGLAAGLVGIASIVNAVLLYISGHAVFAKYLYVLYIPGTGELAVFCGAMLGACLGFLWYNSYPAEVFMGDVGSLSLGGALGSLAVITKHEIVLALVGGIFVVEALSVILQVGYFKLTNGKRIFRMAPLHHHFELKKWPEPKVIVRFWIIGIILALLSLLTLKLR.

10 consecutive transmembrane segments (helical) span residues 28-48, 73-93, 98-118, 132-152, 168-188, 199-219, 235-255, 263-283, 288-308, and 338-358; these read LAILTSFFFTFIIAPPCIRWL, TMGGIIITASVLVAVLMWGNL, MWIMIISFLGFGLIGFIDDYL, YKLFAQLLLASSVTLFLYFNP, WLIDLGIFYLPFAIFVIVGSS, GLAAGLVGIASIVNAVLLYIS, GTGELAVFCGAMLGACLGFLW, VFMGDVGSLSLGGALGSLAVI, IVLALVGGIFVVEALSVILQV, and KVIVRFWIIGIILALLSLLTL.

The protein belongs to the glycosyltransferase 4 family. MraY subfamily. The cofactor is Mg(2+).

The protein localises to the cell inner membrane. It catalyses the reaction UDP-N-acetyl-alpha-D-muramoyl-L-alanyl-gamma-D-glutamyl-meso-2,6-diaminopimeloyl-D-alanyl-D-alanine + di-trans,octa-cis-undecaprenyl phosphate = di-trans,octa-cis-undecaprenyl diphospho-N-acetyl-alpha-D-muramoyl-L-alanyl-D-glutamyl-meso-2,6-diaminopimeloyl-D-alanyl-D-alanine + UMP. It participates in cell wall biogenesis; peptidoglycan biosynthesis. Catalyzes the initial step of the lipid cycle reactions in the biosynthesis of the cell wall peptidoglycan: transfers peptidoglycan precursor phospho-MurNAc-pentapeptide from UDP-MurNAc-pentapeptide onto the lipid carrier undecaprenyl phosphate, yielding undecaprenyl-pyrophosphoryl-MurNAc-pentapeptide, known as lipid I. This Thermodesulfovibrio yellowstonii (strain ATCC 51303 / DSM 11347 / YP87) protein is Phospho-N-acetylmuramoyl-pentapeptide-transferase.